The chain runs to 286 residues: 2-dehydro-3-deoxyphosphooctonate aldolase (286 aa).

Belongs to the KdsA family.

The protein resides in the cytoplasm. It catalyses the reaction D-arabinose 5-phosphate + phosphoenolpyruvate + H2O = 3-deoxy-alpha-D-manno-2-octulosonate-8-phosphate + phosphate. Its pathway is carbohydrate biosynthesis; 3-deoxy-D-manno-octulosonate biosynthesis; 3-deoxy-D-manno-octulosonate from D-ribulose 5-phosphate: step 2/3. It participates in bacterial outer membrane biogenesis; lipopolysaccharide biosynthesis. This chain is 2-dehydro-3-deoxyphosphooctonate aldolase, found in Bradyrhizobium sp. (strain BTAi1 / ATCC BAA-1182).